The primary structure comprises 328 residues: MAKDIRVLLYYLYTPIENAEQFAADHLAFCKSIGLKGRILVADEGINGTVSGDYETTQKYMDYVHSLPGMEELWFKIDEESEQAFKKMFVRYKKEIVHLGLEDNDFDNDINPLETTGAYLSPKEFKEALLDKDTVVLDTRNDYEYDLGHFRGAIRPDIRNFRELPQWVRDNKEKFMDKRVVVYCTGGVRCEKFSGWMVREGYKDVGQLHGGIATYGKDPEVQGELWDGKMYVFDERIAVDVNHVNPTIVGKDWFDGTPCERYVNCGNPFCNRRILTSEENEDKYLRGCSHECRVHPRNRYVSKNELTQAEVIERLAAIGESLDQAATV.

Positions 130–224 (LDKDTVVLDT…YGKDPEVQGE (95 aa)) constitute a Rhodanese domain. The active-site Cysteine persulfide intermediate is Cys-184.

This sequence belongs to the TrhO family.

It carries out the reaction uridine(34) in tRNA + AH2 + O2 = 5-hydroxyuridine(34) in tRNA + A + H2O. Catalyzes oxygen-dependent 5-hydroxyuridine (ho5U) modification at position 34 in tRNAs. The protein is tRNA uridine(34) hydroxylase of Streptococcus pneumoniae (strain P1031).